A 138-amino-acid chain; its full sequence is Acidic phospholipase A2 BITP01A (138 aa).

The first 16 residues, 1 to 16 (MRTLWIMAVLLVGVEG), serve as a signal peptide directing secretion. 7 disulfides stabilise this stretch: C42–C131, C44–C60, C59–C111, C65–C138, C66–C104, C73–C97, and C91–C102. The Ca(2+) site is built by Y43, G45, and G47. The active site involves H63. Ca(2+) is bound at residue D64. The active site involves D105.

It depends on Ca(2+) as a cofactor. Expressed by the venom gland.

The protein resides in the secreted. The catalysed reaction is a 1,2-diacyl-sn-glycero-3-phosphocholine + H2O = a 1-acyl-sn-glycero-3-phosphocholine + a fatty acid + H(+). In terms of biological role, snake venom phospholipase A2 (PLA2) that induces edema in mice, produces neuromuscular blockade in chick biventer cervicis, increases CK release and produces myonecrosis. PLA2 catalyzes the calcium-dependent hydrolysis of the 2-acyl groups in 3-sn-phosphoglycerides. In Bothrops insularis (Golden lancehead), this protein is Acidic phospholipase A2 BITP01A.